The following is a 203-amino-acid chain: MNVLIVYYSLYGHVAAMAQAVAEGVHQVPGMTATLRRVPETLSEEVIGKMGATEAQKALSHVPACTLEELEDADAIVFGTPTRFGNMCGQMRQFLDATGQIWMRGGLVGKPGGVFCSTATQHGGQETTLMSFIQTLLHHGMIVVGLPYSFAGQMRLDEVTGGSPYGATTIAGGDGSRMPSENELDAARFQGRHIADVTRRLRA.

In terms of domain architecture, Flavodoxin-like spans 3–194; it reads VLIVYYSLYG…DAARFQGRHI (192 aa). Residues 9–14 and 82–84 contribute to the FMN site; these read SLYGHV and TRF. Residue Y11 participates in NAD(+) binding. Residue W102 coordinates substrate. Residues 117–123 and H138 contribute to the FMN site; that span reads STATQHG.

The protein belongs to the WrbA family. The cofactor is FMN.

The enzyme catalyses a quinone + NADH + H(+) = a quinol + NAD(+). It catalyses the reaction a quinone + NADPH + H(+) = a quinol + NADP(+). The polypeptide is NAD(P)H dehydrogenase (quinone) (Solidesulfovibrio magneticus (strain ATCC 700980 / DSM 13731 / RS-1) (Desulfovibrio magneticus)).